The following is a 461-amino-acid chain: MPPSGPRGTLLLLPLLLLLLLRAVLAVPLERGAPNKEETPATESPDTGLYYHRYLQEVIDVLETDGHFREKLQAANAEDIKSGKLSRELDFVSHHVRTKLDELKRQEVSRLRMLLKAKMDAEQDPNVQVDHLNLLKQFEHLDPQNQHTFEARDLELLIQTATRDLAQYDAAHHEEFKRYEMLKEHERRRYLESLGEEQRKEAERKLEEQQRRHREHPKVNVPGSQAQLKEVWEELDGLDPNRFNPKTFFILHDINSDGVLDEQELEALFTKELEKVYDPKNEEDDMREMEEERLRMREHVMKNVDTNQDRLVTLEEFLASTQRKEFGDTGEGWETVEMHPAYTEEELRRFEEELAAREAELNAKAQRLSQETEALGRSQGRLEAQKRELQQAVLHMEQRKQQQQQQQGHKAPAAHPEGQLKFHPDTDDVPVPAPAGDQKEVDTSEKKLLERLPEVEVPQHL.

Positions 1–26 (MPPSGPRGTLLLLPLLLLLLLRAVLA) are cleaved as a signal peptide. An O-glycosylated at one site region spans residues 42 to 51 (TESPDTGLYY). Ser86 carries the phosphoserine; by FAM20C modification. Thr148 is modified (phosphothreonine; by FAM20C). Residues 150-218 (EARDLELLIQ…QQRRHREHPK (69 aa)) adopt a coiled-coil conformation. Residues 172–218 (HHEEFKRYEMLKEHERRRYLESLGEEQRKEAERKLEEQQRRHREHPK) mediate DNA binding. Over residues 193–210 (SLGEEQRKEAERKLEEQQ) the composition is skewed to basic and acidic residues. A disordered region spans residues 193–221 (SLGEEQRKEAERKLEEQQRRHREHPKVNV). The binds to GNAI2 and GNAI3 stretch occupies residues 228 to 321 (LKEVWEELDG…VTLEEFLAST (94 aa)). EF-hand domains lie at 240–275 (PNRFNPKTFFILHDINSDGVLDEQELEALFTKELEK) and 292–327 (ERLRMREHVMKNVDTNQDRLVTLEEFLASTQRKEFG). Ca(2+)-binding residues include Asp253, Asn255, Asp257, Glu264, Asp305, Asn307, Asp309, and Glu316. The GBA motif lies at 303-333 (NVDTNQDRLVTLEEFLASTQRKEFGDTGEGW). Positions 341-407 (AYTEEELRRF…QRKQQQQQQQ (67 aa)) form a coiled coil. The interval 368-461 (LSQETEALGR…LPEVEVPQHL (94 aa)) is disordered. Ser369 is subject to Phosphoserine; by FAM20C. Residues 437–461 (DQKEVDTSEKKLLERLPEVEVPQHL) show a composition bias toward basic and acidic residues.

It belongs to the nucleobindin family. As to quaternary structure, interacts (via GBA motif) with guanine nucleotide-binding protein G(i) alpha subunits GNAI1, GNAI2 and GNAI3 with higher affinity for GNAI1 and GNAI3 than for GNAI2. Preferentially interacts with inactive rather than active GNAI3. Interaction with GNAI3 is inhibited when NUCB1 binds calcium, probably due to a conformational change which renders the GBA motif inaccessible. O-glycosylated. Expressed both in fetal and adult heart, lung, liver, kidney and brain, and in adult skeletal muscle, placenta and pancreas.

It localises to the golgi apparatus. It is found in the cis-Golgi network membrane. The protein resides in the cytoplasm. Its subcellular location is the secreted. Its function is as follows. Major calcium-binding protein of the Golgi which may have a role in calcium homeostasis. Acts as a non-receptor guanine nucleotide exchange factor which binds to and activates alpha subunits of guanine nucleotide-binding proteins (G proteins). This Homo sapiens (Human) protein is Nucleobindin-1 (NUCB1).